A 350-amino-acid polypeptide reads, in one-letter code: tRNA uridine(34) hydroxylase (350 aa).

The Rhodanese domain maps to aspartate 146–leucine 240. Cysteine 200 serves as the catalytic Cysteine persulfide intermediate.

This sequence belongs to the TrhO family.

It catalyses the reaction uridine(34) in tRNA + AH2 + O2 = 5-hydroxyuridine(34) in tRNA + A + H2O. In terms of biological role, catalyzes oxygen-dependent 5-hydroxyuridine (ho5U) modification at position 34 in tRNAs. This Yersinia enterocolitica serotype O:8 / biotype 1B (strain NCTC 13174 / 8081) protein is tRNA uridine(34) hydroxylase.